The following is a 572-amino-acid chain: Formate--tetrahydrofolate ligase (572 aa).

ATP is bound at residue 65 to 72 (TPLGEGKT).

The protein belongs to the formate--tetrahydrofolate ligase family.

It carries out the reaction (6S)-5,6,7,8-tetrahydrofolate + formate + ATP = (6R)-10-formyltetrahydrofolate + ADP + phosphate. The protein operates within one-carbon metabolism; tetrahydrofolate interconversion. The polypeptide is Formate--tetrahydrofolate ligase (Chloroflexus aurantiacus (strain ATCC 29366 / DSM 635 / J-10-fl)).